Consider the following 36-residue polypeptide: Defensin-like turtle egg white protein TEWP (36 aa).

The residue at position 1 (Gln1) is a Pyrrolidone carboxylic acid. Disulfide bonds link Cys4–Cys30, Cys8–Cys29, and Cys12–Cys24.

This sequence belongs to the beta-defensin family. As to quaternary structure, monomer. In terms of tissue distribution, detected in egg white (at protein level).

It localises to the secreted. Its function is as follows. Antibacterial and antiviral peptide. Has strong inhibitory activity towards E.coli and S.typhimurium. Has significant antiviral activity against Chandipura virus. This chain is Defensin-like turtle egg white protein TEWP, found in Caretta caretta (Loggerhead sea turtle).